A 219-amino-acid polypeptide reads, in one-letter code: GTP-binding protein Rit1 (219 aa).

GTP-binding positions include 28-35 (GAGGVGKS), 75-79 (DTAGQ), and 134-137 (NKSD).

It belongs to the small GTPase superfamily. Ras family. In terms of assembly, interacts with AFDN, the C-terminal domain of RALGDS and RLF, but not with RIN1 and PIK3CA. RLF binds exclusively to the active GTP-bound form. Strongly interacts with BRAF, but only weakly with RAF1. BARF and RAF1 association is dependent upon the GTP-bound state. Interacts with RGL3. Expressed in many tissues.

Its subcellular location is the cell membrane. It carries out the reaction GTP + H2O = GDP + phosphate + H(+). Its activity is regulated as follows. Alternates between an inactive form bound to GDP and an active form bound to GTP. Plays a crucial role in coupling NGF stimulation to the activation of both EPHB2 and MAPK14 signaling pathways and in NGF-dependent neuronal differentiation. Involved in ELK1 transactivation through the Ras-MAPK signaling cascade that mediates a wide variety of cellular functions, including cell proliferation, survival, and differentiation. The polypeptide is GTP-binding protein Rit1 (Rit1) (Mus musculus (Mouse)).